The following is a 66-amino-acid chain: Large ribosomal subunit protein bL33c (66 aa).

The protein belongs to the bacterial ribosomal protein bL33 family.

The protein localises to the plastid. It localises to the chloroplast. The chain is Large ribosomal subunit protein bL33c from Platanus occidentalis (Sycamore).